The following is a 66-amino-acid chain: Large ribosomal subunit protein bL35 (66 aa).

It belongs to the bacterial ribosomal protein bL35 family.

In Moorella thermoacetica (strain ATCC 39073 / JCM 9320), this protein is Large ribosomal subunit protein bL35.